A 190-amino-acid polypeptide reads, in one-letter code: Xanthine phosphoribosyltransferase (190 aa).

Xanthine-binding residues include Leu-20 and Asn-27. 128 to 132 serves as a coordination point for 5-phospho-alpha-D-ribose 1-diphosphate; that stretch reads ANGNA. Lys-156 lines the xanthine pocket.

Belongs to the purine/pyrimidine phosphoribosyltransferase family. Xpt subfamily. Homodimer.

Its subcellular location is the cytoplasm. The catalysed reaction is XMP + diphosphate = xanthine + 5-phospho-alpha-D-ribose 1-diphosphate. It functions in the pathway purine metabolism; XMP biosynthesis via salvage pathway; XMP from xanthine: step 1/1. In terms of biological role, converts the preformed base xanthine, a product of nucleic acid breakdown, to xanthosine 5'-monophosphate (XMP), so it can be reused for RNA or DNA synthesis. The chain is Xanthine phosphoribosyltransferase from Clostridium novyi (strain NT).